The sequence spans 263 residues: Acyl-[acyl-carrier-protein]--UDP-N-acetylglucosamine O-acyltransferase (263 aa).

It belongs to the transferase hexapeptide repeat family. LpxA subfamily. Homotrimer.

It is found in the cytoplasm. It carries out the reaction a (3R)-hydroxyacyl-[ACP] + UDP-N-acetyl-alpha-D-glucosamine = a UDP-3-O-[(3R)-3-hydroxyacyl]-N-acetyl-alpha-D-glucosamine + holo-[ACP]. It participates in glycolipid biosynthesis; lipid IV(A) biosynthesis; lipid IV(A) from (3R)-3-hydroxytetradecanoyl-[acyl-carrier-protein] and UDP-N-acetyl-alpha-D-glucosamine: step 1/6. In terms of biological role, involved in the biosynthesis of lipid A, a phosphorylated glycolipid that anchors the lipopolysaccharide to the outer membrane of the cell. The polypeptide is Acyl-[acyl-carrier-protein]--UDP-N-acetylglucosamine O-acyltransferase (Stenotrophomonas maltophilia (strain R551-3)).